The chain runs to 182 residues: Sec-independent protein translocase protein TatB (182 aa).

A helical membrane pass occupies residues 1 to 21; that stretch reads MFDIGFSELLLVFVIGLIVLG. 2 disordered regions span residues 87 to 107 and 121 to 182; these read QAAE…ASDE and TQHE…SDKP. Over residues 168-182 the composition is skewed to low complexity; that stretch reads AAPVVESSPSSSDKP.

Belongs to the TatB family. The Tat system comprises two distinct complexes: a TatABC complex, containing multiple copies of TatA, TatB and TatC subunits, and a separate TatA complex, containing only TatA subunits. Substrates initially bind to the TatABC complex, which probably triggers association of the separate TatA complex to form the active translocon.

Its subcellular location is the cell inner membrane. Part of the twin-arginine translocation (Tat) system that transports large folded proteins containing a characteristic twin-arginine motif in their signal peptide across membranes. Together with TatC, TatB is part of a receptor directly interacting with Tat signal peptides. TatB may form an oligomeric binding site that transiently accommodates folded Tat precursor proteins before their translocation. In Salmonella choleraesuis (strain SC-B67), this protein is Sec-independent protein translocase protein TatB.